The sequence spans 382 residues: MANQGQRVSWGDESTKTRGRSNSRGRKNNNIPLSFFNPITLQQGSKFWNLCPRDFVPKGIGNRDQQIGYWNRQTRYRMVKGQRKELPERWFFYYLGTGPHADAKFKDKLDGVVWVAKDGAMNKPTTLGSRGANNESKALKFDGKVPGEFQLEVNQSRDNSRSRSQSRSRSRNRSQSRGRQQFNNKKDDSVEQAVLAALKKLGVDTEKQQQRSRSKSKERSNSKTRDTTPKNENKHTWKRTAGKGDVTRFYGARSSSANFGDTDLVANGSSAKHYPQLAECVPSVSSILFGSYWTSKEDGDQIEVTFTHKYHLPKDDPKTGQFLQQINAYARPSEVAKEQRKRKSRSKSAERSEQDVVPDALIENYTDVFDDTQVEIIDEVTN.

Disordered stretches follow at residues 1 to 29 and 150 to 240; these read MANQGQRVSWGDESTKTRGRSNSRGRKNN and QLEV…WKRT. S9 carries the post-translational modification Phosphoserine; by host. The segment covering 17–27 has biased composition (basic residues); it reads TRGRSNSRGRK. The CoV N NTD domain maps to 31 to 153; that stretch reads IPLSFFNPIT…KVPGEFQLEV (123 aa). The interval 33–159 is RNA-binding; the sequence is LSFFNPITLQ…QLEVNQSRDN (127 aa). Positions 154–163 are enriched in low complexity; sequence NQSRDNSRSR. S156 is modified (phosphoserine; by host). Residues 164–176 show a composition bias toward basic residues; that stretch reads SQSRSRSRNRSQS. Positions 201 to 235 are enriched in basic and acidic residues; sequence LGVDTEKQQQRSRSKSKERSNSKTRDTTPKNENKH. The region spanning 224-337 is the CoV N CTD domain; sequence TRDTTPKNEN…AYARPSEVAK (114 aa). Residues 231-334 are dimerization; sequence NENKHTWKRT…QINAYARPSE (104 aa). Residues S254 and S256 each carry the phosphoserine; by host modification. Residues 328-358 form a disordered region; it reads AYARPSEVAKEQRKRKSRSKSAERSEQDVVP.

Belongs to the alphacoronavirus nucleocapsid protein family. As to quaternary structure, homooligomer. Both monomeric and oligomeric forms interact with RNA. Interacts with protein M. Interacts with NSP3; this interaction serves to tether the genome to the newly translated replicase-transcriptase complex at a very early stage of infection. ADP-ribosylated. The ADP-ribosylation is retained in the virion during infection. Post-translationally, phosphorylated on serine and threonine residues.

The protein localises to the virion. Its subcellular location is the host endoplasmic reticulum-Golgi intermediate compartment. It localises to the host Golgi apparatus. Its function is as follows. Packages the positive strand viral genome RNA into a helical ribonucleocapsid (RNP) and plays a fundamental role during virion assembly through its interactions with the viral genome and membrane protein M. Plays an important role in enhancing the efficiency of subgenomic viral RNA transcription as well as viral replication. The polypeptide is Nucleoprotein (Sus scrofa (Pig)).